A 113-amino-acid chain; its full sequence is Protein FMC1 homolog (113 aa).

Residues 94–113 (SAGLVGLKLPHQPGGKGWEP) are disordered.

Belongs to the FMC1 family. Interacts with ATPAF2.

Its subcellular location is the mitochondrion. In terms of biological role, plays a role in the assembly/stability of the mitochondrial membrane ATP synthase (F(1)F(0) ATP synthase or Complex V). The chain is Protein FMC1 homolog from Homo sapiens (Human).